Reading from the N-terminus, the 175-residue chain is Arsenite oxidase subunit AioB (175 aa).

A signal peptide (tat-type signal) is located at residues 1-32 (MSDTINLTRRGFLKVSGSGVAVAATLSPIASA). One can recognise a Rieske domain in the interval 62–158 (NEPVSFTYPD…LRYDEASDAL (97 aa)). [2Fe-2S] cluster is bound by residues C102, H104, C120, and H123. A disulfide bond links C107 and C122.

It belongs to the AOX family. Heterodimer consisting of a large and a small subunit. [2Fe-2S] cluster is required as a cofactor. Post-translationally, predicted to be exported by the Tat system. The position of the signal peptide cleavage has not been experimentally proven.

It catalyses the reaction 2 oxidized [azurin] + arsenite + H2O = 2 reduced [azurin] + arsenate + 3 H(+). Its function is as follows. Involved in the detoxification of arsenic. Oxidizes As(III)O3(3-) (arsenite) to the somewhat less toxic As(V)O4(3-) (arsenate). This Alcaligenes faecalis protein is Arsenite oxidase subunit AioB (aioB).